A 181-amino-acid chain; its full sequence is ATP synthase subunit delta (181 aa).

This sequence belongs to the ATPase delta chain family. F-type ATPases have 2 components, F(1) - the catalytic core - and F(0) - the membrane proton channel. F(1) has five subunits: alpha(3), beta(3), gamma(1), delta(1), epsilon(1). F(0) has three main subunits: a(1), b(2) and c(10-14). The alpha and beta chains form an alternating ring which encloses part of the gamma chain. F(1) is attached to F(0) by a central stalk formed by the gamma and epsilon chains, while a peripheral stalk is formed by the delta and b chains.

Its subcellular location is the cell inner membrane. Functionally, f(1)F(0) ATP synthase produces ATP from ADP in the presence of a proton or sodium gradient. F-type ATPases consist of two structural domains, F(1) containing the extramembraneous catalytic core and F(0) containing the membrane proton channel, linked together by a central stalk and a peripheral stalk. During catalysis, ATP synthesis in the catalytic domain of F(1) is coupled via a rotary mechanism of the central stalk subunits to proton translocation. In terms of biological role, this protein is part of the stalk that links CF(0) to CF(1). It either transmits conformational changes from CF(0) to CF(1) or is implicated in proton conduction. The polypeptide is ATP synthase subunit delta (Hyphomonas neptunium (strain ATCC 15444)).